Consider the following 883-residue polypeptide: Probable valine--tRNA ligase, cytoplasmic (883 aa).

Over residues 1–23 the composition is skewed to basic and acidic residues; it reads MTLKMDRKALKEEKKKQKLEKFL. The segment at 1–49 is disordered; the sequence is MTLKMDRKALKEEKKKQKLEKFLNKKTTQSKISKAPKPAKNKSSSGYDP. The segment covering 30–45 has biased composition (low complexity); that stretch reads SKISKAPKPAKNKSSS. A 'HIGH' region motif is present at residues 82–92; sequence PNITGSLHIGH. A 'KMSKS' region motif is present at residues 586–590; it reads KMSKS. Lys589 contributes to the ATP binding site.

It belongs to the class-I aminoacyl-tRNA synthetase family.

Its subcellular location is the cytoplasm. It carries out the reaction tRNA(Val) + L-valine + ATP = L-valyl-tRNA(Val) + AMP + diphosphate. In Vairimorpha ceranae (strain BRL01) (Microsporidian parasite), this protein is Probable valine--tRNA ligase, cytoplasmic.